A 275-amino-acid chain; its full sequence is Large ribosomal subunit protein uL2 (275 aa).

A disordered region spans residues 221–275 (RGTAMNPIDHPHGGGEGKNFGKHPVSPWGVQSKGKKTRKNKRTEKYILYNRKYKK). A compositionally biased stretch (basic residues) spans 253–262 (KGKKTRKNKR).

This sequence belongs to the universal ribosomal protein uL2 family. Part of the 50S ribosomal subunit. Forms a bridge to the 30S subunit in the 70S ribosome.

Its function is as follows. One of the primary rRNA binding proteins. Required for association of the 30S and 50S subunits to form the 70S ribosome, for tRNA binding and peptide bond formation. It has been suggested to have peptidyltransferase activity; this is somewhat controversial. Makes several contacts with the 16S rRNA in the 70S ribosome. The protein is Large ribosomal subunit protein uL2 of Wigglesworthia glossinidia brevipalpis.